The following is a 347-amino-acid chain: Isopentenyl-diphosphate delta-isomerase (347 aa).

A disordered region spans residues 1–31; the sequence is MDESNSQFEKRKRDHIRIALDPRSQTDGQNG. Residues 8–20 show a composition bias toward basic and acidic residues; that stretch reads FEKRKRDHIRIAL. 11 to 12 contacts substrate; sequence RK. FMN-binding positions include Ser72, 73–75, Ser103, and Asn132; that span reads SMT. 103–105 is a binding site for substrate; it reads SQR. Gln166 is a binding site for substrate. Residue Glu167 participates in Mg(2+) binding. FMN-binding positions include Lys198, Ser223, Thr228, 279–281, and 300–301; these read GVR and AK.

Belongs to the IPP isomerase type 2 family. Homooctamer. Dimer of tetramers. The cofactor is FMN. It depends on NADPH as a cofactor. Mg(2+) is required as a cofactor.

The protein resides in the cytoplasm. The enzyme catalyses isopentenyl diphosphate = dimethylallyl diphosphate. Functionally, involved in the biosynthesis of isoprenoids. Catalyzes the 1,3-allylic rearrangement of the homoallylic substrate isopentenyl (IPP) to its allylic isomer, dimethylallyl diphosphate (DMAPP). This chain is Isopentenyl-diphosphate delta-isomerase, found in Bdellovibrio bacteriovorus (strain ATCC 15356 / DSM 50701 / NCIMB 9529 / HD100).